We begin with the raw amino-acid sequence, 354 residues long: Protein sex-lethal (354 aa).

A disordered region spans residues 1–21 (MYGNNNPGSNNNNGGYPPYGY). 2 consecutive RRM domains span residues 125-203 (TNLI…YARP) and 211-291 (TNLY…LAEE).

In terms of assembly, part of a complex containing fl(2)d, Sxl and vir. Part of a complex composed of at least mei-P26, bam, bgcn and Sxl; this complex is involved in translational repression of nanos mRNA. interacts with mei-p26. Interacts with nito. Interacts with Unr; cooperates with Unr to prevent translation of msl-2 transcripts. Interacts with how; promoting nuclear retention of msl-2 transcripts. As to expression, expressed in somatic tissues, but not in the pole cells, which are the precursors of the germline. Expressed in the anterior of the germarium.

It localises to the nucleus. The protein localises to the cytoplasm. In terms of biological role, sex determination switch protein, which controls sexual development and dosage compensation in females. Sxl protein is only active in females: it is inactive in males throughout development. Acts as a mRNA-binding protein, which specifically binds to a subset of pre-mRNAs and mRNAs and regulates their processing and/or translation. Binds nanos mRNA and is involved in bam-bgcn mediated repression of nanos mRNA translation. Promotes sexual development by controlling the female-specific alternative splicing of the transformer (tra) pre-mRNA: binds tightly to a characteristic uridine-rich polypyrimidine tract at the non-sex specific 3' splice site in one of the tra introns, preventing the general splicing factor U2AF from binding to this site and forcing it to bind to the female-specific 3' splice site. Acts as an inhibitor of dosage compensation in females by preventing production of msl-2 protein, an essential component of the MSL complex, the complex that mediates X-chromosome dosage compensation. Specifically binds to uridine stretches in both the 5'- and 3'-UTR of msl-2 transcripts. Sxl first acts at the splicing level by promoting retention of an intron in the 5' UTR of msl-2 pre-mRNA. The retained intron contains Sxl-binding sites that are required for subsequent steps of repression: after msl-2 mRNA export into the cytoplasm, Sxl coordinates its translational repression by targeting early steps of translation initiation. Together with how, Sxl also prevents production of msl-2 protein by preventing nuclear export of msl-2 transcripts. Embryo-specific product, which is expressed early only in female embryos and specifies female-adult specific splicing. The sequence is that of Protein sex-lethal from Drosophila melanogaster (Fruit fly).